We begin with the raw amino-acid sequence, 441 residues long: Ribulose bisphosphate carboxylase large chain (441 aa).

Residues N89 and T139 each coordinate substrate. Catalysis depends on K141, which acts as the Proton acceptor. K143 serves as a coordination point for substrate. Residues K167, D169, and E170 each contribute to the Mg(2+) site. Position 167 is an N6-carboxylysine (K167). Catalysis depends on H260, which acts as the Proton acceptor. Residues R261, H293, and S345 each contribute to the substrate site.

Belongs to the RuBisCO large chain family. Type I subfamily. In terms of assembly, heterohexadecamer of 8 large chains and 8 small chains; disulfide-linked. The disulfide link is formed within the large subunit homodimers. Mg(2+) serves as cofactor. Post-translationally, the disulfide bond which can form in the large chain dimeric partners within the hexadecamer appears to be associated with oxidative stress and protein turnover.

The protein resides in the plastid. It is found in the chloroplast. It carries out the reaction 2 (2R)-3-phosphoglycerate + 2 H(+) = D-ribulose 1,5-bisphosphate + CO2 + H2O. It catalyses the reaction D-ribulose 1,5-bisphosphate + O2 = 2-phosphoglycolate + (2R)-3-phosphoglycerate + 2 H(+). Its function is as follows. RuBisCO catalyzes two reactions: the carboxylation of D-ribulose 1,5-bisphosphate, the primary event in carbon dioxide fixation, as well as the oxidative fragmentation of the pentose substrate in the photorespiration process. Both reactions occur simultaneously and in competition at the same active site. In Viola sororia (Woolly blue violet), this protein is Ribulose bisphosphate carboxylase large chain.